The primary structure comprises 297 residues: MTTPLMHSSIKSLKLINQGKVRDIYDIDDRHMLLVASDRLSAFDVILPTPIKDKGAILTQIANFWFEKLKHIVPNHLTGIDPNTVVKDPAEQAQLGPRALVVKKLKPLPIEAIVRGYLAGSGWKEYQASQSVCGIPLPAGLQEAAQLPEPLFTPSSKAEVGDHDENITLEKCAQLIGPELADKVARVSVQLYKEAAAYALGRGIIIADTKFEFGLDEAGELYLIDEVLTPDSSRFWPQDQYQVGSNPPSFDKQYVRDWLESTGWNKTPPGPALPDEVAARTADKYREAFERLTGKPF.

It belongs to the SAICAR synthetase family.

The catalysed reaction is 5-amino-1-(5-phospho-D-ribosyl)imidazole-4-carboxylate + L-aspartate + ATP = (2S)-2-[5-amino-1-(5-phospho-beta-D-ribosyl)imidazole-4-carboxamido]succinate + ADP + phosphate + 2 H(+). It participates in purine metabolism; IMP biosynthesis via de novo pathway; 5-amino-1-(5-phospho-D-ribosyl)imidazole-4-carboxamide from 5-amino-1-(5-phospho-D-ribosyl)imidazole-4-carboxylate: step 1/2. The sequence is that of Phosphoribosylaminoimidazole-succinocarboxamide synthase from Methylobacillus flagellatus (strain ATCC 51484 / DSM 6875 / VKM B-1610 / KT).